The chain runs to 259 residues: Dickkopf-related protein 2 (259 aa).

The N-terminal stretch at 1–33 (MAALMRSKDSSCCLLLLAAVLMVESSQIGSSRA) is a signal peptide. A glycan (N-linked (GlcNAc...) asparagine) is linked at Asn-52. The segment at 78 to 127 (CSSDKECEVGRYCHSPHQGSSACMVCRRKKKRCHRDGMCCPSTRCNNGIC) is DKK-type Cys-1. 5 disulfides stabilise this stretch: Cys-183–Cys-195, Cys-189–Cys-204, Cys-194–Cys-231, Cys-214–Cys-239, and Cys-233–Cys-256. Positions 183-256 (CLRSSDCIEG…YSSKARLHVC (74 aa)) are DKK-type Cys-2.

This sequence belongs to the dickkopf family. As to quaternary structure, interacts with LRP5 and LRP6. In terms of processing, may be proteolytically processed by a furin-like protease. In terms of tissue distribution, expressed in heart, brain, skeletal muscle and lung.

The protein resides in the secreted. Functionally, antagonizes canonical Wnt signaling by inhibiting LRP5/6 interaction with Wnt and by forming a ternary complex with the transmembrane protein KREMEN that promotes internalization of LRP5/6. DKKs play an important role in vertebrate development, where they locally inhibit Wnt regulated processes such as antero-posterior axial patterning, limb development, somitogenesis and eye formation. In the adult, Dkks are implicated in bone formation and bone disease, cancer and Alzheimer disease. The sequence is that of Dickkopf-related protein 2 (DKK2) from Homo sapiens (Human).